The following is a 550-amino-acid chain: Efflux pump DEP3 (550 aa).

The disordered stretch occupies residues 1-33 (MSEQSTLAGPYTEKPGVESQNPTGDGKASFDET). The next 11 helical transmembrane spans lie at 44-64 (AIAYAAMLSTTFLFALDNTIV), 78-98 (LELISWIGTGFALGTMFILLW), 109-129 (WVYIFNILLFEVGSAVCGAAP), 139-159 (VIAGIGGSGMYSGTLTYVSVL), 172-192 (STVVWGVGSVVGPVVGGAFAA), 199-219 (WGFYINLPIGAVFAPAYMILF), 242-262 (AVIFLAGSACLTVALTFGGVV), 268-288 (GTIIALWTVTGVLLVAFIVLL), 319-339 (FLASGIILAMTYYVPLYFQFI), 351-371 (LLPLIMFMVAFSMVNGFLMPK), and 373-393 (GLIPIWYIVGSALTLIGSALM). Asn399 carries N-linked (GlcNAc...) asparagine glycosylation. Helical transmembrane passes span 410-430 (ILVGAGAGCYIVAGFAIVQSL), 439-459 (AVGAMTISQDLGMVLFLAICG), and 515-535 (SIWAFFMAAAALSFVCSWPLF).

It belongs to the major facilitator superfamily. TCR/Tet family.

Its subcellular location is the cell membrane. Its function is as follows. Efflux pump; part of the gene cluster that mediates the biosynthesis of depudecin, a highly oxidized eleven-carbon linear polyketide that acts as a histone deacetylase (HDAC) inhibitor and makes a small contribution to pathogenesis. Is presumed either to be responsible for exporting depudecin, to provide self-protection, or both. In Fusarium langsethiae, this protein is Efflux pump DEP3.